The sequence spans 255 residues: Indole-3-glycerol phosphate synthase (255 aa).

The protein belongs to the TrpC family.

It catalyses the reaction 1-(2-carboxyphenylamino)-1-deoxy-D-ribulose 5-phosphate + H(+) = (1S,2R)-1-C-(indol-3-yl)glycerol 3-phosphate + CO2 + H2O. Its pathway is amino-acid biosynthesis; L-tryptophan biosynthesis; L-tryptophan from chorismate: step 4/5. The protein is Indole-3-glycerol phosphate synthase of Streptococcus pneumoniae (strain 70585).